The sequence spans 539 residues: Tyrosinase (539 aa).

6 residues coordinate Cu cation: histidine 63, histidine 84, histidine 93, histidine 290, histidine 294, and histidine 333. Positions 82-84 form a cross-link, 2'-(S-cysteinyl)-histidine (Cys-His); the sequence is CHH.

It belongs to the tyrosinase family. In terms of assembly, homotetramer. Cu(2+) serves as cofactor. In terms of processing, the N-terminus is blocked.

The enzyme catalyses 2 L-dopa + O2 = 2 L-dopaquinone + 2 H2O. It carries out the reaction L-tyrosine + O2 = L-dopaquinone + H2O. Activated by acidifying treatment at pH 3.0. Its function is as follows. This is a copper-containing oxidase that functions in the formation of pigments such as melanins and other polyphenolic compounds. The polypeptide is Tyrosinase (melO) (Aspergillus oryzae (strain ATCC 42149 / RIB 40) (Yellow koji mold)).